Reading from the N-terminus, the 101-residue chain is Small ribosomal subunit protein uS14 (101 aa).

Belongs to the universal ribosomal protein uS14 family. Part of the 30S ribosomal subunit. Contacts proteins S3 and S10.

In terms of biological role, binds 16S rRNA, required for the assembly of 30S particles and may also be responsible for determining the conformation of the 16S rRNA at the A site. In Methylobacterium sp. (strain 4-46), this protein is Small ribosomal subunit protein uS14.